The sequence spans 1257 residues: Pesticidal crystal protein Cry12Aa (1257 aa).

It belongs to the delta endotoxin family.

Functionally, endotoxin with nematicidal activity. The chain is Pesticidal crystal protein Cry12Aa (cry12Aa) from Bacillus thuringiensis.